A 472-amino-acid chain; its full sequence is MDYLPLFADLKQRPVLIVGGGEVAARKIELLHRAGAQVWVVAQTLSSELEQQYQDGRIHWLAQDFLPEQLDNVFLVIAATNDTVLNAAVFAAADQRCILANVVDDQPLCSFIFPSIVDRSPLVVAISSSGQAPVLARILREKLEALLPTRLSDMAAIAGRWRGRVKQHMASMGERRRFWEHAFSGRFASLISRGQLTEAENELQLSLEGQHRALGEVALVGAGPGDAGLLTLRGLQVMQQADVVLYDHLVSPEVLDLVRRDAERICVGKRAGAHSVTQEATNQLLVTLAQQGKRVVRLKGGDPFIFGRGGEELQVVAQAGIPFQVVPGVTAAAGATAYAGIPLTHRDHAQSVTFITGHCRPDGDDLDWQALARGRQTLAIYMGTVKAAAISQQLIAHGRSSTTPVAVIGRGTRVDQQVLIGTLAQLESLAQQAPTPALLVIGEVVNLHHQIAWFGQQPQTESAISPSVVNLA.

The tract at residues 1-203 is precorrin-2 dehydrogenase /sirohydrochlorin ferrochelatase; sequence MDYLPLFADL…GQLTEAENEL (203 aa). NAD(+) is bound by residues 22 to 23 and 43 to 44; these read EV and QT. Serine 128 is subject to Phosphoserine. Positions 215–472 are uroporphyrinogen-III C-methyltransferase; that stretch reads GEVALVGAGP…AISPSVVNLA (258 aa). S-adenosyl-L-methionine is bound at residue proline 224. The active-site Proton acceptor is the aspartate 247. Lysine 269 (proton donor) is an active-site residue. S-adenosyl-L-methionine-binding positions include 300–302, isoleucine 305, 330–331, methionine 382, and glycine 411; these read GGD and TA.

In the N-terminal section; belongs to the precorrin-2 dehydrogenase / sirohydrochlorin ferrochelatase family. This sequence in the C-terminal section; belongs to the precorrin methyltransferase family.

It catalyses the reaction uroporphyrinogen III + 2 S-adenosyl-L-methionine = precorrin-2 + 2 S-adenosyl-L-homocysteine + H(+). The catalysed reaction is precorrin-2 + NAD(+) = sirohydrochlorin + NADH + 2 H(+). The enzyme catalyses siroheme + 2 H(+) = sirohydrochlorin + Fe(2+). It functions in the pathway cofactor biosynthesis; adenosylcobalamin biosynthesis; precorrin-2 from uroporphyrinogen III: step 1/1. The protein operates within cofactor biosynthesis; adenosylcobalamin biosynthesis; sirohydrochlorin from precorrin-2: step 1/1. Its pathway is porphyrin-containing compound metabolism; siroheme biosynthesis; precorrin-2 from uroporphyrinogen III: step 1/1. It participates in porphyrin-containing compound metabolism; siroheme biosynthesis; siroheme from sirohydrochlorin: step 1/1. It functions in the pathway porphyrin-containing compound metabolism; siroheme biosynthesis; sirohydrochlorin from precorrin-2: step 1/1. Functionally, multifunctional enzyme that catalyzes the SAM-dependent methylations of uroporphyrinogen III at position C-2 and C-7 to form precorrin-2 via precorrin-1. Then it catalyzes the NAD-dependent ring dehydrogenation of precorrin-2 to yield sirohydrochlorin. Finally, it catalyzes the ferrochelation of sirohydrochlorin to yield siroheme. The chain is Siroheme synthase 1 from Yersinia pseudotuberculosis serotype I (strain IP32953).